The following is a 300-amino-acid chain: Type 1 fimbrin D-mannose specific adhesin (300 aa).

An N-terminal signal peptide occupies residues 1 to 21; sequence MKRVITLFAVLLMGWSVNAWS.

This sequence belongs to the fimbrial protein family.

It localises to the fimbrium. Functionally, involved in regulation of length and mediation of adhesion of type 1 fimbriae (but not necessary for the production of fimbriae). Adhesin responsible for the binding to D-mannose. It is laterally positioned at intervals in the structure of the type 1 fimbriae. In order to integrate FimH in the fimbriae FimF and FimG are needed. The sequence is that of Type 1 fimbrin D-mannose specific adhesin (fimH) from Escherichia coli (strain K12).